Reading from the N-terminus, the 139-residue chain is ATP synthase epsilon chain (139 aa).

It belongs to the ATPase epsilon chain family. In terms of assembly, F-type ATPases have 2 components, CF(1) - the catalytic core - and CF(0) - the membrane proton channel. CF(1) has five subunits: alpha(3), beta(3), gamma(1), delta(1), epsilon(1). CF(0) has three main subunits: a, b and c.

The protein resides in the cell inner membrane. In terms of biological role, produces ATP from ADP in the presence of a proton gradient across the membrane. This chain is ATP synthase epsilon chain, found in Alcanivorax borkumensis (strain ATCC 700651 / DSM 11573 / NCIMB 13689 / SK2).